We begin with the raw amino-acid sequence, 605 residues long: Kelch-like protein 41b (605 aa).

The 71-residue stretch at 32–102 folds into the BTB domain; sequence VDCTLKIGDR…YSAEIDLVDD (71 aa). The 103-residue stretch at 136–238 folds into the BACK domain; the sequence is CLAVFRLGLV…PEKYFREKVE (103 aa). Kelch repeat units lie at residues 345-397, 398-446, 447-494, 496-541, and 543-598; these read QLFI…ESEN, LLFA…SHNN, LVYC…VHKG, IIVT…SSGG, and LFSI…MRLN.

It localises to the cytoplasm. Its subcellular location is the cytoskeleton. The protein resides in the sarcoplasmic reticulum membrane. It is found in the endoplasmic reticulum membrane. Functionally, involved in skeletal muscle development and maintenance. The chain is Kelch-like protein 41b from Danio rerio (Zebrafish).